We begin with the raw amino-acid sequence, 122 residues long: ATP synthase epsilon chain (122 aa).

Belongs to the ATPase epsilon chain family. In terms of assembly, F-type ATPases have 2 components, CF(1) - the catalytic core - and CF(0) - the membrane proton channel. CF(1) has five subunits: alpha(3), beta(3), gamma(1), delta(1), epsilon(1). CF(0) has three main subunits: a, b and c.

The protein localises to the cell membrane. Produces ATP from ADP in the presence of a proton gradient across the membrane. In Rhodococcus jostii (strain RHA1), this protein is ATP synthase epsilon chain.